The following is a 157-amino-acid chain: SsrA-binding protein (157 aa).

The interval 130 to 157 is disordered; the sequence is KAEHDKRDTIKEREGKREVERVMKSRHR.

It belongs to the SmpB family.

The protein resides in the cytoplasm. Functionally, required for rescue of stalled ribosomes mediated by trans-translation. Binds to transfer-messenger RNA (tmRNA), required for stable association of tmRNA with ribosomes. tmRNA and SmpB together mimic tRNA shape, replacing the anticodon stem-loop with SmpB. tmRNA is encoded by the ssrA gene; the 2 termini fold to resemble tRNA(Ala) and it encodes a 'tag peptide', a short internal open reading frame. During trans-translation Ala-aminoacylated tmRNA acts like a tRNA, entering the A-site of stalled ribosomes, displacing the stalled mRNA. The ribosome then switches to translate the ORF on the tmRNA; the nascent peptide is terminated with the 'tag peptide' encoded by the tmRNA and targeted for degradation. The ribosome is freed to recommence translation, which seems to be the essential function of trans-translation. The sequence is that of SsrA-binding protein from Acidovorax sp. (strain JS42).